Reading from the N-terminus, the 1115-residue chain is Calcium-transporting ATPase PAT1 (1115 aa).

The Stromal portion of the chain corresponds to 1–99; sequence MTGSHEMESI…SIVLDALSDH (99 aa). A helical membrane pass occupies residues 100–120; that stretch reads ILILLIVAAVVSIVLGSIDYT. The Lumenal portion of the chain corresponds to 121–126; sequence SDHPET. A helical transmembrane segment spans residues 127 to 147; it reads GWIDGVAILVAVILVVGITSL. At 148-235 the chain is on the stromal side; the sequence is NDFKNQARFR…KGQPQDNMDP (88 aa). The chain crosses the membrane as a helical span at residues 236 to 256; the sequence is FLISGSMVIEGFGTMLVTAVG. Topologically, residues 257 to 287 are lumenal; that stretch reads VNSFNGKTMMGLRVASEDTPLQMKLSVLASR. Residues 288–308 form a helical membrane-spanning segment; it reads IGYFGMGAAILMLLIAIPKYF. Topologically, residues 309–328 are stromal; sequence IQRKVHDIEITREDAQPIVQ. The helical transmembrane segment at 329-349 threads the bilayer; that stretch reads LVISAITIVVVAVPEGLPLAV. Residues 350–735 are Lumenal-facing; sequence TMALAYGMMK…GRNIYDAICK (386 aa). Residue Asp385 is the 4-aspartylphosphate intermediate of the active site. Residues Asp678 and Asp682 each coordinate Mg(2+). Residues 736–756 form a helical membrane-spanning segment; sequence FLQFQLTVNVVAVTVAFIGTL. Residues 757–832 are Stromal-facing; it reads TSDVVEDKDN…GKNAPLITRS (76 aa). The segment at 762-784 is disordered; it reads EDKDNSSSSGSADKVTEEEPRQG. Residues 833–853 traverse the membrane as a helical segment; that stretch reads MWKNIIGQAALQLAILFTILY. Topologically, residues 854-873 are lumenal; that stretch reads QGHNIFQHFVPQAHGPIIKN. A helical transmembrane segment spans residues 874 to 894; the sequence is GLHHYTLVFNCFVFLQLFNEI. The Stromal portion of the chain corresponds to 895–913; sequence NARVLGSRTNPFKNFFNNP. A helical transmembrane segment spans residues 914–934; sequence IFIAVMIFTLGVQIIFVTFGG. At 935 to 943 the chain is on the lumenal side; the sequence is SATSTDSLY. The helical transmembrane segment at 944–964 threads the bilayer; the sequence is IVEWICCVVVGAISLPVGLLL. Over 965–1115 the chain is Stromal; it reads RKIPIREPVV…LHLPVNQINN (151 aa). The segment at 984–1056 is disordered; it reads AVYTSPSPNP…IPSSSSNLVN (73 aa). The span at 1040–1053 shows a compositional bias: low complexity; it reads NDNINTPIPSSSSN.

This sequence belongs to the cation transport ATPase (P-type) (TC 3.A.3) family. Type IIB subfamily.

Its subcellular location is the contractile vacuole membrane. It is found in the cell membrane. It carries out the reaction Ca(2+)(in) + ATP + H2O = Ca(2+)(out) + ADP + phosphate + H(+). Functionally, calcium ATPase involved in Ca(2+) homeostasis as a component of the contractile vacuole complex. This is Calcium-transporting ATPase PAT1 (patA) from Dictyostelium discoideum (Social amoeba).